The chain runs to 490 residues: N-succinylglutamate 5-semialdehyde dehydrogenase (490 aa).

Gly224–Gly229 is an NAD(+) binding site. Catalysis depends on residues Glu247 and Cys281.

This sequence belongs to the aldehyde dehydrogenase family. AstD subfamily.

The catalysed reaction is N-succinyl-L-glutamate 5-semialdehyde + NAD(+) + H2O = N-succinyl-L-glutamate + NADH + 2 H(+). It participates in amino-acid degradation; L-arginine degradation via AST pathway; L-glutamate and succinate from L-arginine: step 4/5. In terms of biological role, catalyzes the NAD-dependent reduction of succinylglutamate semialdehyde into succinylglutamate. In Hahella chejuensis (strain KCTC 2396), this protein is N-succinylglutamate 5-semialdehyde dehydrogenase.